Here is a 141-residue protein sequence, read N- to C-terminus: Hemoglobin subunit alpha-D (141 aa).

The region spanning 1–141 is the Globin domain; that stretch reads MLTAEDKKLI…VSAVLAEKYR (141 aa). Heme b-binding residues include His58 and His87.

This sequence belongs to the globin family. Heterotetramer of two alpha-D chains and two beta chains. As to expression, red blood cells.

In terms of biological role, involved in oxygen transport from the lung to the various peripheral tissues. The polypeptide is Hemoglobin subunit alpha-D (HBAD) (Meleagris gallopavo (Wild turkey)).